The sequence spans 943 residues: MDKIEVRGARTHNLKNINLTIPRDKLIVITGLSGSGKSSLAFDTLYAEGQRRYVESLSAYARQFLSLMEKPDVDHIEGLSPAISIEQKSTSHNPRSTVGTVTEIHDYLRLLFARVGEPRCPNHDVPLAAQTISQMVDKVLSLPEESKMMLLAPVVKERKGEHVKLLEQIAAQGYIRARIDGEICDLSDAPKLELHKKHTIEVVVDRFKVRSDLATRLAESFETALELSGGTAVVASMDEPETEELVFSANFACPHCGYSVPELEPRLFSFNNPAGACPTCDGLGVQQYFDEKRVVQNPSISLASGAVKGWDRRNFYYYQMLTSLAKHYEFDIESPFEALPKKIQQIILNGSGKEEIEFQYMNDRGDVVVRHHAFEGILNNMARRYKETESLSVREELAKNISTCPCHDCGGSRLRQEARHVYIGTTTLPDVAEKSIGETLHFFSELHLSGQRAQIAEKILKEIKERLQFLVNVGLDYLSLSRSAETLSGGEAQRIRLASQIGAGLVGVMYVLDEPSIGLHQRDNERLLNTLLHLRNLGNTVIVVEHDEDAIMAADHIIDIGPGAGVHGGQIVAEGSAKAIMANPHSITGKFLSGVEKIEIPAKRTALDKKKMLKLEGATGNNLKSVNLAIPVGLFTCVTGVSGSGKSTLINDTLFPLAQNALNRAENTQFAPYQSISGLEFFDKVIDIDQSPIGRTPRSNPATYTGLFTPIRELFAGVPESRARGYNPGRFSFNVRGGRCEACQGDGVIKVEMHFLPDVYVPCEQCKGKRYNRETLEIRYKGKTIHQVLEMTVEEAREFFDAIPQIARKLQTLMDVGLSYIRLGQSSTTLSGGEAQRVKLATELSKRDTGKTLYVLDEPTTGLHFADIKQLLTVLHRLRDQGNTIVVIEHNLDVIKTADWIIDLGPEGGNGGGQIIATGTPEQVAEVKGSHTARFLKTLLQKR.

Residue 31 to 38 coordinates ATP; the sequence is GLSGSGKS. Residues 253-280 form a C4-type zinc finger; the sequence is CPHCGYSVPELEPRLFSFNNPAGACPTC. 2 ABC transporter domains span residues 310–587 and 607–937; these read WDRR…PHSI and LDKK…RFLK. 640–647 is a binding site for ATP; it reads GVSGSGKS. Residues 740 to 766 form a C4-type zinc finger; it reads CEACQGDGVIKVEMHFLPDVYVPCEQC.

This sequence belongs to the ABC transporter superfamily. UvrA family. Forms a heterotetramer with UvrB during the search for lesions.

It localises to the cytoplasm. The UvrABC repair system catalyzes the recognition and processing of DNA lesions. UvrA is an ATPase and a DNA-binding protein. A damage recognition complex composed of 2 UvrA and 2 UvrB subunits scans DNA for abnormalities. When the presence of a lesion has been verified by UvrB, the UvrA molecules dissociate. The protein is UvrABC system protein A of Pasteurella multocida (strain Pm70).